Consider the following 187-residue polypeptide: Elongation factor P (187 aa).

This sequence belongs to the elongation factor P family.

It is found in the cytoplasm. Its pathway is protein biosynthesis; polypeptide chain elongation. Its function is as follows. Involved in peptide bond synthesis. Stimulates efficient translation and peptide-bond synthesis on native or reconstituted 70S ribosomes in vitro. Probably functions indirectly by altering the affinity of the ribosome for aminoacyl-tRNA, thus increasing their reactivity as acceptors for peptidyl transferase. This Acidothermus cellulolyticus (strain ATCC 43068 / DSM 8971 / 11B) protein is Elongation factor P.